The chain runs to 420 residues: ATP phosphoribosyltransferase regulatory subunit (420 aa).

Belongs to the class-II aminoacyl-tRNA synthetase family. HisZ subfamily. Heteromultimer composed of HisG and HisZ subunits.

Its subcellular location is the cytoplasm. The protein operates within amino-acid biosynthesis; L-histidine biosynthesis; L-histidine from 5-phospho-alpha-D-ribose 1-diphosphate: step 1/9. Required for the first step of histidine biosynthesis. May allow the feedback regulation of ATP phosphoribosyltransferase activity by histidine. The sequence is that of ATP phosphoribosyltransferase regulatory subunit from Bacillus cereus (strain ATCC 10987 / NRS 248).